A 755-amino-acid chain; its full sequence is Polyribonucleotide nucleotidyltransferase (755 aa).

Positions 493 and 499 each coordinate Mg(2+). Positions P560 to I619 constitute a KH domain. The 70-residue stretch at G629–R698 folds into the S1 motif domain. The tract at residues A699–D755 is disordered. The segment covering R719–D755 has biased composition (basic and acidic residues).

The protein belongs to the polyribonucleotide nucleotidyltransferase family. Requires Mg(2+) as cofactor.

It is found in the cytoplasm. The catalysed reaction is RNA(n+1) + phosphate = RNA(n) + a ribonucleoside 5'-diphosphate. In terms of biological role, involved in mRNA degradation. Catalyzes the phosphorolysis of single-stranded polyribonucleotides processively in the 3'- to 5'-direction. The protein is Polyribonucleotide nucleotidyltransferase of Chloroflexus aurantiacus (strain ATCC 29366 / DSM 635 / J-10-fl).